We begin with the raw amino-acid sequence, 299 residues long: ATP phosphoribosyltransferase (299 aa).

Belongs to the ATP phosphoribosyltransferase family. Long subfamily. The cofactor is Mg(2+).

Its subcellular location is the cytoplasm. It catalyses the reaction 1-(5-phospho-beta-D-ribosyl)-ATP + diphosphate = 5-phospho-alpha-D-ribose 1-diphosphate + ATP. It participates in amino-acid biosynthesis; L-histidine biosynthesis; L-histidine from 5-phospho-alpha-D-ribose 1-diphosphate: step 1/9. Feedback inhibited by histidine. Its function is as follows. Catalyzes the condensation of ATP and 5-phosphoribose 1-diphosphate to form N'-(5'-phosphoribosyl)-ATP (PR-ATP). Has a crucial role in the pathway because the rate of histidine biosynthesis seems to be controlled primarily by regulation of HisG enzymatic activity. The chain is ATP phosphoribosyltransferase from Mannheimia succiniciproducens (strain KCTC 0769BP / MBEL55E).